The primary structure comprises 444 residues: Acyl-CoA 6-desaturase (444 aa).

Over 1–122 (MGKGGNQDEG…FRALRKTAED (122 aa)) the chain is Cytoplasmic. One can recognise a Cytochrome b5 heme-binding domain in the interval 18 to 95 (MPTFRWEEIQ…MKPLLIGELA (78 aa)). A helical transmembrane segment spans residues 123-143 (MNLFKSNQLFFLLHLAHIIAM). Residues 144-147 (ESIA) lie on the Lumenal side of the membrane. A helical membrane pass occupies residues 148 to 168 (WFTLFYFGNGWIPTIITAFVL). The Cytoplasmic portion of the chain corresponds to 169–264 (ATSQAQAGWL…KYLPYNHQHE (96 aa)). Residues 180–184 (HDYGH) carry the Histidine box-1 motif. Positions 217–221 (HFQHH) match the Histidine box-2 motif. A helical membrane pass occupies residues 265 to 285 (YFFLIGPPLLIPLYFQYQIIM). Residues 286–305 (TMIVRKYWADLAWAISYYTR) are Lumenal-facing. A helical membrane pass occupies residues 306 to 326 (FFITYIPFYGVLGSILFLNFI). The Cytoplasmic segment spans residues 327–444 (RFLESHWFVW…QLWLDAYLHK (118 aa)). Positions 382–386 (QIEHH) match the Histidine box-3 motif.

It belongs to the fatty acid desaturase type 1 family.

Its subcellular location is the endoplasmic reticulum membrane. The enzyme catalyses (9Z,12Z)-octadecadienoyl-CoA + 2 Fe(II)-[cytochrome b5] + O2 + 2 H(+) = (6Z,9Z,12Z)-octadecatrienoyl-CoA + 2 Fe(III)-[cytochrome b5] + 2 H2O. It carries out the reaction (9Z,12Z,15Z)-octadecatrienoyl-CoA + 2 Fe(II)-[cytochrome b5] + O2 + 2 H(+) = (6Z,9Z,12Z,15Z)-octadecatetraenoyl-CoA + 2 Fe(III)-[cytochrome b5] + 2 H2O. The catalysed reaction is (9Z,12Z,15Z,18Z,21Z)-tetracosapentaenoyl-CoA + 2 Fe(II)-[cytochrome b5] + O2 + 2 H(+) = (6Z,9Z,12Z,15Z,18Z,21Z)-tetracosahexaenoyl-CoA + 2 Fe(III)-[cytochrome b5] + 2 H2O. It catalyses the reaction (11E)-octadecenoyl-CoA + 2 Fe(II)-[cytochrome b5] + O2 + 2 H(+) = (6Z,11E)-octadecadienoyl-CoA + 2 Fe(III)-[cytochrome b5] + 2 H2O. The enzyme catalyses (11Z,14Z)-eicosadienoyl-CoA + 2 Fe(II)-[cytochrome b5] + O2 + 2 H(+) = (8Z,11Z,14Z)-eicosatrienoyl-CoA + 2 Fe(III)-[cytochrome b5] + 2 H2O. It carries out the reaction (11Z,14Z,17Z)-eicosatrienoyl-CoA + 2 Fe(II)-[cytochrome b5] + O2 + 2 H(+) = (8Z,11Z,14Z,17Z)-eicosatetraenoyl-CoA + 2 Fe(III)-[cytochrome b5] + 2 H2O. Its pathway is lipid metabolism; polyunsaturated fatty acid biosynthesis. In terms of biological role, involved in the biosynthesis of highly unsaturated fatty acids (HUFA) from the essential polyunsaturated fatty acids (PUFA) linoleic acid (LA) (18:2n-6) and alpha-linolenic acid (ALA) (18:3n-3) precursors, acting as a fatty acyl-coenzyme A (CoA) desaturase that introduces a cis double bond at carbon 6 of the fatty acyl chain. Catalyzes the first and rate limiting step in this pathway which is the desaturation of LA (18:2n-6) and ALA (18:3n-3) into gamma-linoleate (GLA) (18:3n-6) and stearidonate (18:4n-3), respectively. Subsequently, in the biosynthetic pathway of HUFA n-3 series, it desaturates tetracosapentaenoate (24:5n-3) to tetracosahexaenoate (24:6n-3), which is then converted to docosahexaenoate (DHA)(22:6n-3), an important lipid for nervous system function. It can also desaturate (11E)-octadecenoate (trans-vaccenoate, a metabolite in the biohydrogenation pathway of LA and the predominant trans fatty acid in cow milk) at carbon 6 generating (6Z,11E)-octadecadienoate. In addition to Delta-6 activity, this enzyme exhibits Delta-8 activity with slight biases toward n-3 fatty acyl-CoA substrates. The protein is Acyl-CoA 6-desaturase (FADS2) of Bos taurus (Bovine).